Here is a 110-residue protein sequence, read N- to C-terminus: Ribonuclease P protein component 4 (110 aa).

Zn(2+) is bound by residues Cys65, Cys68, Cys94, and Cys97.

This sequence belongs to the eukaryotic/archaeal RNase P protein component 4 family. Consists of a catalytic RNA component and at least 5 protein subunits. The cofactor is Zn(2+).

It localises to the cytoplasm. The catalysed reaction is Endonucleolytic cleavage of RNA, removing 5'-extranucleotides from tRNA precursor.. Functionally, part of ribonuclease P, a protein complex that generates mature tRNA molecules by cleaving their 5'-ends. The protein is Ribonuclease P protein component 4 of Methanococcus maripaludis (strain DSM 14266 / JCM 13030 / NBRC 101832 / S2 / LL).